The chain runs to 444 residues: UDP-N-acetylmuramate--L-alanine ligase (444 aa).

G110–S116 lines the ATP pocket.

This sequence belongs to the MurCDEF family.

The protein resides in the cytoplasm. The catalysed reaction is UDP-N-acetyl-alpha-D-muramate + L-alanine + ATP = UDP-N-acetyl-alpha-D-muramoyl-L-alanine + ADP + phosphate + H(+). Its pathway is cell wall biogenesis; peptidoglycan biosynthesis. Functionally, cell wall formation. The polypeptide is UDP-N-acetylmuramate--L-alanine ligase (Streptococcus pneumoniae (strain Hungary19A-6)).